A 923-amino-acid chain; its full sequence is Protocadherin gamma-B4 (923 aa).

The N-terminal stretch at 1–30 (MGSGAGELGRAERLPVLFLFLLSLFCPALC) is a signal peptide. Cadherin domains are found at residues 31–133 (EQIR…TPKF), 134–242 (TQNS…APVF), 243–345 (SQDV…APEV), 346–450 (IFQS…APVF), 451–560 (SQSS…APRV), and 568–673 (DGSA…LPDI). The Extracellular segment spans residues 31–689 (EQIRYRIPEE…SDLQAELQFY (659 aa)). N-linked (GlcNAc...) asparagine glycans are attached at residues N417 and N543. A helical transmembrane segment spans residues 690-710 (LVVALALISVLFLVAMILAIA). At 711 to 923 (LRLRRSSSPA…KKKSGKKEKK (213 aa)) the chain is on the cytoplasmic side. 2 disordered regions span residues 797–832 (SHQQ…WPNN) and 893–923 (ATLT…KEKK). Residues 913–923 (NKKKSGKKEKK) show a composition bias toward basic residues.

It is found in the cell membrane. Potential calcium-dependent cell-adhesion protein. May be involved in the establishment and maintenance of specific neuronal connections in the brain. In Homo sapiens (Human), this protein is Protocadherin gamma-B4 (PCDHGB4).